Here is a 453-residue protein sequence, read N- to C-terminus: MAKVYWPYFDPEYENLSSRINPPSVSIDNTSCKECTLVKVDSMNKPGILLEVVQVLTDLDLTITKAYISSDGGWFMDVFHVTDQQGNKVTDSKTIDYIEKVLGPKGHASASQNTWPGKRVGVHSLGDHTSIEIIARDRPGLLSEVSAVLADLNINVVAAEAWTHNRRIACVLYVNDNATSRAVDDPERLSSMEEQLNNVLRGCEEQDEKFARTSLSIGSTHVDRRLHQMFFADRDYEAVTKLDDSASCGFEPKITVEHCEEKGYSVINVSCEDRPKLMFDIVCTLTDMQYIVFHATISSSGSHASQEYFIRHKDGCTLDTEGEKERVVKCLEAAIHRRVSEGWSLELCAKDRVGLLSEVTRILREHGLSVSRAGVTTVGEQAVNVFYVKDASGNPVDVKTIEALRGEIGHSMMIDFKNKVPSRKWKEEGQAGTGGGWAKTSFFFGNLLEKLLP.

4 ACT domains span residues 37 to 112 (LVKV…SASQ), 130 to 212 (SIEI…KFAR), 266 to 341 (VINV…RVSE), and 344 to 423 (SLEL…VPSR).

Expressed in roots, cotyledons, rosette and cauline leaves, sepals, style, and pedicels and tips of young developing siliques.

Its function is as follows. May bind amino acids. The protein is ACT domain-containing protein ACR3 of Arabidopsis thaliana (Mouse-ear cress).